Here is a 428-residue protein sequence, read N- to C-terminus: AP-1 complex subunit mu-2 (428 aa).

Positions 170 to 426 (KNEVFLDVIE…ITMAGEYELR (257 aa)) constitute an MHD domain.

It belongs to the adaptor complexes medium subunit family. Adaptor protein complex 1 (AP-1) is a heterotetramer composed of two large adaptins (gamma-type subunit and beta-type subunit), a medium adaptin (mu-type subunit) and a small adaptin (sigma-type subunit). Ubiquitous.

Its subcellular location is the golgi apparatus. The protein localises to the trans-Golgi network membrane. It localises to the early endosome membrane. It is found in the cytoplasmic vesicle. The protein resides in the clathrin-coated vesicle membrane. Subunit of clathrin-associated adaptor protein complex 1 that plays a role in protein sorting at the trans-Golgi network and early endosomes (TGN/EE). The AP complexes mediate the recruitment of clathrin to membranes and the recognition of sorting signals within the cytosolic tails of transmembrane cargo molecules. Required for KNOLLE localization at the cell plate to mediate cytokinesis. Functions redundantly with AP1M1 in multiple post-Golgi trafficking pathways leading from the TGN to the vacuole, the plasma membrane, and the cell-division plane. This is AP-1 complex subunit mu-2 (AP1M2) from Arabidopsis thaliana (Mouse-ear cress).